The following is a 78-amino-acid chain: Major outer membrane lipoprotein Lpp (78 aa).

An N-terminal signal peptide occupies residues 1–20 (MNRTKLVLGAVILASTMLAG). A lipid anchor (N-palmitoyl cysteine) is attached at cysteine 21. Residue cysteine 21 is the site of S-diacylglycerol cysteine attachment. 2 repeats span residues 24 to 34 (NAKIDQLSSDV) and 38 to 48 (NAKVDQLSNDV). Residues 27 to 75 (IDQLSSDVQTLNAKVDQLSNDVNAVRADVQAAKDDAARANQRLDNQAQA) are a coiled coil. Lysine 78 bears the N6-murein peptidoglycan lysine mark.

This sequence belongs to the Lpp family. Homotrimer.

Its subcellular location is the cell outer membrane. It localises to the secreted. The protein resides in the cell wall. In terms of biological role, a highly abundant outer membrane lipoprotein that controls the distance between the inner and outer membranes. The only protein known to be covalently linked to the peptidoglycan network (PGN). Also non-covalently binds the PGN. The link between the cell outer membrane and PGN contributes to maintenance of the structural and functional integrity of the cell envelope, and maintains the correct distance between the PGN and the outer membrane. The sequence is that of Major outer membrane lipoprotein Lpp from Yersinia pestis.